The following is a 357-amino-acid chain: UPF0283 membrane protein HSM_0945 (357 aa).

3 helical membrane-spanning segments follow: residues 67-87, 96-116, and 213-233; these read LMATICLFSCGILAQSVQWLV, IAFVFAMVSLFLVLLGLGTII, and AVESALIVAVSPLAIVDMFFI.

Belongs to the UPF0283 family.

The protein localises to the cell inner membrane. The chain is UPF0283 membrane protein HSM_0945 from Histophilus somni (strain 2336) (Haemophilus somnus).